A 500-amino-acid polypeptide reads, in one-letter code: Metal transporter Nramp3.1 (500 aa).

12 helical membrane-spanning segments follow: residues 51-71 (LWLF…PGNL), 79-99 (AIAG…GLLV), 128-148 (MILW…EVIG), 160-180 (VLPL…FLFL), 188-208 (LEAA…WMFA), 234-254 (AVGV…SALV), 280-300 (AALA…AKGF), 322-342 (YGGG…AAGQ), 370-390 (ALIT…VFDT), 401-421 (WLNM…LCLV), 439-459 (VSWL…LDFF), and 467-487 (VFTT…IYLI).

This sequence belongs to the NRAMP (TC 2.A.55) family. As to expression, expressed in roots, stems, buds and leaves.

It localises to the golgi apparatus. It is found in the trans-Golgi network membrane. The catalysed reaction is Mn(2+)(in) = Mn(2+)(out). It carries out the reaction Fe(2+)(in) = Fe(2+)(out). Its function is as follows. Divalent metal transporter. Can transport manganese (Mn) and iron (Fe). Involved in the control of cell-to-cell transport of manganese (Mn) between organs and tissues to monitor Mn homeostasis. This chain is Metal transporter Nramp3.1, found in Populus trichocarpa (Western balsam poplar).